A 332-amino-acid polypeptide reads, in one-letter code: Isopentenyl phosphate kinase (332 aa).

Met-1 bears the N-acetylmethionine mark. Residue 18-22 (KLGGA) coordinates ATP. Ala-96 provides a ligand contact to substrate. Gly-97 provides a ligand contact to ATP. Residues His-101 and Gly-202 each contribute to the substrate site. ATP-binding positions include Asp-223, 228 to 233 (YDRPPS), Gly-279, and Lys-283.

It belongs to the isopentenyl phosphate kinase family.

The protein localises to the cytoplasm. Its subcellular location is the cytosol. The catalysed reaction is isopentenyl phosphate + ATP = isopentenyl diphosphate + ADP. Functionally, catalyzes the formation of isopentenyl diphosphate (IPP), the universal five-carbon isoprenoid building block of all natural isoprenoids. Acts in parallel with the mevalonate (MVA) pathway and plays an important role in regulating the formation of both MVA and methylerythritol phosphate (MEP) pathway-derived terpenoid compounds by controlling the ratio of isopentenyl phosphate (IP) and dimethylallyl phosphate (DMAP) to isopentenyl diphosphate (IPP) and dimethylallyl diphosphate (DMAPP). Controls the levels of IP and DMAP that are competitive inhibitors of the farnesyl diphosphate synthase. Regulates the production of farnesyl diphosphate-derived terpenoids in the cytosol, and geranyl diphosphate-derived compounds in plastids. The sequence is that of Isopentenyl phosphate kinase from Arabidopsis thaliana (Mouse-ear cress).